We begin with the raw amino-acid sequence, 567 residues long: Phosphoglucomutase-like protein 5 (567 aa).

The segment at 1-26 (MEGSPIPVLTVPTAPYEDQRPAGGGG) is disordered. At T120 the chain carries Phosphothreonine. S122 carries the post-translational modification Phosphoserine.

It belongs to the phosphohexose mutase family. In terms of assembly, interacts with DMD/dystrophin; the interaction is direct. Interacts with UTRN/utrophin. As to expression, detected in smooth and cardiac muscle at high levels and in skeletal muscle at low level. Present in other tissues due to vascular or other smooth muscle component. Low levels are present in liver, kidney, skin and brain (at protein level).

The protein localises to the cell junction. The protein resides in the adherens junction. It localises to the cytoplasm. It is found in the cytoskeleton. Its subcellular location is the cell membrane. The protein localises to the sarcolemma. Its function is as follows. Component of adherens-type cell-cell and cell-matrix junctions. Has no phosphoglucomutase activity in vitro. The protein is Phosphoglucomutase-like protein 5 of Homo sapiens (Human).